Consider the following 207-residue polypeptide: Putative 3-methyladenine DNA glycosylase (207 aa).

It belongs to the DNA glycosylase MPG family.

The protein is Putative 3-methyladenine DNA glycosylase of Listeria welshimeri serovar 6b (strain ATCC 35897 / DSM 20650 / CCUG 15529 / CIP 8149 / NCTC 11857 / SLCC 5334 / V8).